Consider the following 239-residue polypeptide: ATP-dependent dethiobiotin synthetase BioD (239 aa).

15-20 (EIGKTF) provides a ligand contact to ATP. T19 is a Mg(2+) binding site. K40 is an active-site residue. ATP-binding positions include D57, 118–121 (EGVG), and 178–179 (NH). Residues D57 and E118 each coordinate Mg(2+).

It belongs to the dethiobiotin synthetase family. Homodimer. Mg(2+) serves as cofactor.

Its subcellular location is the cytoplasm. It carries out the reaction (7R,8S)-7,8-diammoniononanoate + CO2 + ATP = (4R,5S)-dethiobiotin + ADP + phosphate + 3 H(+). Its pathway is cofactor biosynthesis; biotin biosynthesis; biotin from 7,8-diaminononanoate: step 1/2. In terms of biological role, catalyzes a mechanistically unusual reaction, the ATP-dependent insertion of CO2 between the N7 and N8 nitrogen atoms of 7,8-diaminopelargonic acid (DAPA, also called 7,8-diammoniononanoate) to form a ureido ring. The sequence is that of ATP-dependent dethiobiotin synthetase BioD from Burkholderia orbicola (strain MC0-3).